The sequence spans 211 residues: Pyridoxine/pyridoxamine 5'-phosphate oxidase (211 aa).

Substrate is bound by residues 7–10 (RREY) and lysine 65. FMN contacts are provided by residues 60-65 (RIVLLK), 75-76 (YT), arginine 81, lysine 82, and glutamine 104. Substrate is bound by residues tyrosine 122, arginine 126, and serine 130. Residues 139–140 (QS) and tryptophan 184 contribute to the FMN site. A substrate-binding site is contributed by 190 to 192 (RLH). An FMN-binding site is contributed by arginine 194.

It belongs to the pyridoxamine 5'-phosphate oxidase family. In terms of assembly, homodimer. Requires FMN as cofactor.

The enzyme catalyses pyridoxamine 5'-phosphate + O2 + H2O = pyridoxal 5'-phosphate + H2O2 + NH4(+). It carries out the reaction pyridoxine 5'-phosphate + O2 = pyridoxal 5'-phosphate + H2O2. It participates in cofactor metabolism; pyridoxal 5'-phosphate salvage; pyridoxal 5'-phosphate from pyridoxamine 5'-phosphate: step 1/1. Its pathway is cofactor metabolism; pyridoxal 5'-phosphate salvage; pyridoxal 5'-phosphate from pyridoxine 5'-phosphate: step 1/1. Catalyzes the oxidation of either pyridoxine 5'-phosphate (PNP) or pyridoxamine 5'-phosphate (PMP) into pyridoxal 5'-phosphate (PLP). This chain is Pyridoxine/pyridoxamine 5'-phosphate oxidase, found in Vibrio cholerae serotype O1 (strain ATCC 39315 / El Tor Inaba N16961).